Reading from the N-terminus, the 172-residue chain is Lipoprotein signal peptidase (172 aa).

2 helical membrane passes run 70–90 and 94–114; these read ERWLLVAGTALIAAGIVAWIW and AKGDVVALGLVLGGAIGNIAD. Catalysis depends on residues D123 and D142. Residues 134-154 traverse the membrane as a helical segment; sequence PFLVFNVADAAITIGVLILVL.

The protein belongs to the peptidase A8 family.

It is found in the cell inner membrane. The catalysed reaction is Release of signal peptides from bacterial membrane prolipoproteins. Hydrolyzes -Xaa-Yaa-Zaa-|-(S,diacylglyceryl)Cys-, in which Xaa is hydrophobic (preferably Leu), and Yaa (Ala or Ser) and Zaa (Gly or Ala) have small, neutral side chains.. Its pathway is protein modification; lipoprotein biosynthesis (signal peptide cleavage). Its function is as follows. This protein specifically catalyzes the removal of signal peptides from prolipoproteins. This chain is Lipoprotein signal peptidase, found in Rhizorhabdus wittichii (strain DSM 6014 / CCUG 31198 / JCM 15750 / NBRC 105917 / EY 4224 / RW1) (Sphingomonas wittichii).